The following is a 334-amino-acid chain: DGAT1/2-independent enzyme synthesizing storage lipids (334 aa).

The Lumenal portion of the chain corresponds to M1 to P50. N5 carries N-linked (GlcNAc...) asparagine glycosylation. The chain crosses the membrane as a helical span at residues L51–L71. Residues H72–L125 are Cytoplasmic-facing. The chain crosses the membrane as a helical span at residues I126 to I146. H130 is a catalytic residue. The Lumenal portion of the chain corresponds to H147–L334.

Belongs to the diacylglycerol acyltransferase family. Highly divergent.

Its subcellular location is the endoplasmic reticulum membrane. The enzyme catalyses a 1,2-diacylglycerol + a 1,2-diacyl-sn-glycero-3-phosphocholine = a triacylglycerol + a 1-acyl-sn-glycero-3-phosphocholine. It carries out the reaction a 1-O-alkyl-2-acyl-sn-glycero-3-phosphocholine + a 1,2-diacylglycerol = a 1-O-alkyl-sn-glycero-3-phosphocholine + a triacylglycerol. The catalysed reaction is a 2-acylglycerol + an acyl-CoA = a 1,2-diacylglycerol + CoA. It catalyses the reaction an acyl-CoA + a 1,2-diacyl-sn-glycerol = a triacyl-sn-glycerol + CoA. The enzyme catalyses 2-(9Z-octadecenoyl)-glycerol + (9Z)-octadecenoyl-CoA = 1,2-di-(9Z-octadecenoyl)-glycerol + CoA. It carries out the reaction 1,2-di-(9Z-octadecenoyl)-sn-glycerol + (9Z)-octadecenoyl-CoA = 1,2,3-tri-(9Z-octadecenoyl)-glycerol + CoA. With respect to regulation, acyltransferase activity is specifically inhibited by TMX1 at the endoplasmic reticulum, restricting accumulation of triacylglycerol. Its function is as follows. Catalytic subunit of the alternative triglyceride biosynthesis pathway, which mediates formation of triacylglycerol from diacylglycerol and membrane phospholipids. Synthesizes triacylglycerol at the expense of membrane phospholipids, such as phosphatidylcholine (PC) and its ether-linked form (ePC), thereby altering the composition of membranes. The alternative triglyceride biosynthesis pathway is probably required to provide the energy required for rapid growth when fuel sources are limiting. It maintains mitochondrial function during periods of extracellular lipid starvation. Can also use acyl-CoA as donor: acts as a acyl-CoA:monoacylglycerol acyltransferase (MGAT), but also shows acyl-CoA:diacylglycerol acyltransferase (DGAT) activity. The protein is DGAT1/2-independent enzyme synthesizing storage lipids (TMEM68) of Bos taurus (Bovine).